A 348-amino-acid polypeptide reads, in one-letter code: Phosphoribosylformylglycinamidine cyclo-ligase (348 aa).

The protein belongs to the AIR synthase family.

It is found in the cytoplasm. The catalysed reaction is 2-formamido-N(1)-(5-O-phospho-beta-D-ribosyl)acetamidine + ATP = 5-amino-1-(5-phospho-beta-D-ribosyl)imidazole + ADP + phosphate + H(+). It functions in the pathway purine metabolism; IMP biosynthesis via de novo pathway; 5-amino-1-(5-phospho-D-ribosyl)imidazole from N(2)-formyl-N(1)-(5-phospho-D-ribosyl)glycinamide: step 2/2. This Cereibacter sphaeroides (strain ATCC 17023 / DSM 158 / JCM 6121 / CCUG 31486 / LMG 2827 / NBRC 12203 / NCIMB 8253 / ATH 2.4.1.) (Rhodobacter sphaeroides) protein is Phosphoribosylformylglycinamidine cyclo-ligase.